The chain runs to 128 residues: Deoxycytidylate deaminase (128 aa).

Residues 5-128 form the CMP/dCMP-type deaminase domain; the sequence is DWDEYFLGIA…IERVVYPKES (124 aa). Residue histidine 81 participates in Zn(2+) binding. Residue glutamate 83 is the Proton donor of the active site. Positions 107 and 110 each coordinate Zn(2+).

Belongs to the cytidine and deoxycytidylate deaminase family.

It catalyses the reaction dCMP + H2O + H(+) = dUMP + NH4(+). This chain is Deoxycytidylate deaminase (36.1), found in Mycobacterium (Mycobacteriophage D29).